A 101-amino-acid polypeptide reads, in one-letter code: Large ribosomal subunit protein uL24 (101 aa).

It belongs to the universal ribosomal protein uL24 family. As to quaternary structure, part of the 50S ribosomal subunit.

Its function is as follows. One of two assembly initiator proteins, it binds directly to the 5'-end of the 23S rRNA, where it nucleates assembly of the 50S subunit. Functionally, one of the proteins that surrounds the polypeptide exit tunnel on the outside of the subunit. The chain is Large ribosomal subunit protein uL24 from Dinoroseobacter shibae (strain DSM 16493 / NCIMB 14021 / DFL 12).